Reading from the N-terminus, the 607-residue chain is Polyadenylate-binding protein 1-like (607 aa).

4 consecutive RRM domains span residues 11 to 89 (SSLY…WSHR), 99 to 175 (GNIF…HFKS), 191 to 268 (TNIY…RAQK), and 294 to 370 (VNLY…LAQR). Positions 523 to 600 (HQPLTVSMLA…AVAVLQVHRE (78 aa)) constitute a PABC domain.

It belongs to the polyadenylate-binding protein type-1 family. As to expression, expressed in ovary and testis.

It localises to the cytoplasm. Poly(A)-binding protein involved in oocyte maturation and early embryo development. It is required for cytosolic mRNA polyadenylation and translational activation of maternally stored mRNA in oocytes. In Mus musculus (Mouse), this protein is Polyadenylate-binding protein 1-like.